Consider the following 198-residue polypeptide: Probable GTP-binding protein EngB (198 aa).

The EngB-type G domain occupies 22 to 197 (TLPEYAFIGR…LDYIEGINNS (176 aa)). Residues 30 to 37 (GRSNVGKS), 57 to 61 (GKTQL), 75 to 78 (DLPG), 142 to 145 (TKAD), and 175 to 178 (ITSA) contribute to the GTP site. Residues Ser-37 and Thr-59 each coordinate Mg(2+).

It belongs to the TRAFAC class TrmE-Era-EngA-EngB-Septin-like GTPase superfamily. EngB GTPase family. Requires Mg(2+) as cofactor.

Its function is as follows. Necessary for normal cell division and for the maintenance of normal septation. The chain is Probable GTP-binding protein EngB from Christiangramia forsetii (strain DSM 17595 / CGMCC 1.15422 / KT0803) (Gramella forsetii).